Here is a 211-residue protein sequence, read N- to C-terminus: Transmembrane protein 247 (211 aa).

Composition is skewed to basic and acidic residues over residues 1-10 (MAMEDREVME) and 31-45 (PEGK…EVPK). The interval 1–90 (MAMEDREVME…AGDGPGLESV (90 aa)) is disordered. Pro residues predominate over residues 63 to 73 (PGPPRSLPPKS). A coiled-coil region spans residues 119-148 (KYLHQENERQRQHEEVMEQLQQQQQQQQAL). The next 2 helical transmembrane spans lie at 159–179 (LLLP…IHII) and 186–206 (VFFL…LCLI).

Its subcellular location is the membrane. This chain is Transmembrane protein 247 (Tmem247), found in Mus musculus (Mouse).